The following is a 186-amino-acid chain: uncharacterized protein (186 aa).

The first 18 residues, 1 to 18 (MKKFFFAAALVVSGLLVG), serve as a signal peptide directing secretion. A lipid anchor (N-palmitoyl cysteine) is attached at Cys19. Residue Cys19 is the site of S-diacylglycerol cysteine attachment.

The protein resides in the cell membrane. This is an uncharacterized protein from Salmonella typhimurium (strain LT2 / SGSC1412 / ATCC 700720).